The primary structure comprises 462 residues: Cysteine--tRNA ligase (462 aa).

Cysteine 29 is a binding site for Zn(2+). A 'HIGH' region motif is present at residues 31-41 (PTVYNHAHIGN). Cysteine 211, histidine 236, and glutamate 240 together coordinate Zn(2+). The 'KMSKS' region motif lies at 269 to 273 (KMSKS). Lysine 272 contributes to the ATP binding site.

The protein belongs to the class-I aminoacyl-tRNA synthetase family. Monomer. It depends on Zn(2+) as a cofactor.

The protein localises to the cytoplasm. The catalysed reaction is tRNA(Cys) + L-cysteine + ATP = L-cysteinyl-tRNA(Cys) + AMP + diphosphate. This Caulobacter sp. (strain K31) protein is Cysteine--tRNA ligase.